The sequence spans 638 residues: MHLSEITHPNQLHGLTVRQLEEIARQIREKHLQTIAASGGHLGPGLGVVELTLALYQTLDLDRDKVVWDVGHQAYPHKLITGRYNEFHTLRQKDGVAGYLKRSENVFDHFGAGHASTSISAALGMALARDAKGEEFKCVAVIGDGALTGGMALEAINHAGHLPDTNLMVVLNDNEMSISPNVGAISRYLNKVRLSDPVQFLTDNLEEQVKHLPFLGDSLTPEMERLKDSMKRLAVSKVGAVIEELGFKYFGPVDGHNLEELIRTFKQAHKAKGPTLVHVATVKGKGYAIAEKDQVGYHAQKPFDLATGKAFPSKKPTPPSYSKVFAHALTTLAENNPKIVGITAAMATGTGLDKLQQRLPKQYIDVGIAEQHAVTLAAGLACEGMRPVVAIYSTFLQRAYDQIIHDVCIQKLPVFFCLDRAGIVGADGPTHQGMYDIAYLRLIPNIVLMAPKDEAELQRMLVTGIEYTDGAIAMRYPRGSGIGAPLMEDGWEPLPIGKGEILRNGDDILLIGYGAMVHSTLQVAEILSEHGISATVINARFVKPLDSELIAPLAKQIGKVATFEEGCLMGGFGSAVCEALQDHDVLVPVKRFGIGDVLVDHATPAESKAAHGLTPAQMAESIRAAFFQKDAAKTTTTV.

Residues His-72 and 113–115 (GHA) each bind thiamine diphosphate. A Mg(2+)-binding site is contributed by Asp-144. Thiamine diphosphate-binding positions include 145–146 (GA), Asn-174, Tyr-287, and Glu-370. Asn-174 is a binding site for Mg(2+).

It belongs to the transketolase family. DXPS subfamily. In terms of assembly, homodimer. The cofactor is Mg(2+). Requires thiamine diphosphate as cofactor.

It carries out the reaction D-glyceraldehyde 3-phosphate + pyruvate + H(+) = 1-deoxy-D-xylulose 5-phosphate + CO2. The protein operates within metabolic intermediate biosynthesis; 1-deoxy-D-xylulose 5-phosphate biosynthesis; 1-deoxy-D-xylulose 5-phosphate from D-glyceraldehyde 3-phosphate and pyruvate: step 1/1. Functionally, catalyzes the acyloin condensation reaction between C atoms 2 and 3 of pyruvate and glyceraldehyde 3-phosphate to yield 1-deoxy-D-xylulose-5-phosphate (DXP). The sequence is that of 1-deoxy-D-xylulose-5-phosphate synthase from Picosynechococcus sp. (strain ATCC 27264 / PCC 7002 / PR-6) (Agmenellum quadruplicatum).